Reading from the N-terminus, the 62-residue chain is Large ribosomal subunit protein uL29 (62 aa).

The protein belongs to the universal ribosomal protein uL29 family.

This Trichlorobacter lovleyi (strain ATCC BAA-1151 / DSM 17278 / SZ) (Geobacter lovleyi) protein is Large ribosomal subunit protein uL29.